The following is a 200-amino-acid chain: Octanoyltransferase (200 aa).

A BPL/LPL catalytic domain is found at 27 to 200 (GAEDDQLWLV…WAELFSARWR (174 aa)). Substrate-binding positions include 66–73 (RGGQITYH), 134–136 (SLG), and 147–149 (GIA). C165 (acyl-thioester intermediate) is an active-site residue.

The protein belongs to the LipB family.

It localises to the cytoplasm. The enzyme catalyses octanoyl-[ACP] + L-lysyl-[protein] = N(6)-octanoyl-L-lysyl-[protein] + holo-[ACP] + H(+). It functions in the pathway protein modification; protein lipoylation via endogenous pathway; protein N(6)-(lipoyl)lysine from octanoyl-[acyl-carrier-protein]: step 1/2. Catalyzes the transfer of endogenously produced octanoic acid from octanoyl-acyl-carrier-protein onto the lipoyl domains of lipoate-dependent enzymes. Lipoyl-ACP can also act as a substrate although octanoyl-ACP is likely to be the physiological substrate. The sequence is that of Octanoyltransferase from Dichelobacter nodosus (strain VCS1703A).